Consider the following 192-residue polypeptide: Phosphoheptose isomerase (192 aa).

Positions 35 to 192 constitute an SIS domain; it reads LIETLENQGK…CIERHFAHKN (158 aa). Residue 50 to 52 participates in substrate binding; it reads NGG. Residues histidine 59 and glutamate 63 each contribute to the Zn(2+) site. Substrate-binding positions include glutamate 63, 92-93, 118-120, serine 123, and glutamine 170; these read ND and STS. Zn(2+)-binding residues include glutamine 170 and histidine 178.

This sequence belongs to the SIS family. GmhA subfamily. In terms of assembly, homotetramer. It depends on Zn(2+) as a cofactor.

The protein localises to the cytoplasm. The enzyme catalyses 2 D-sedoheptulose 7-phosphate = D-glycero-alpha-D-manno-heptose 7-phosphate + D-glycero-beta-D-manno-heptose 7-phosphate. Its pathway is carbohydrate biosynthesis; D-glycero-D-manno-heptose 7-phosphate biosynthesis; D-glycero-alpha-D-manno-heptose 7-phosphate and D-glycero-beta-D-manno-heptose 7-phosphate from sedoheptulose 7-phosphate: step 1/1. The protein operates within bacterial outer membrane biogenesis; LPS core biosynthesis. Its function is as follows. Catalyzes the isomerization of sedoheptulose 7-phosphate in D-glycero-D-manno-heptose 7-phosphate. The polypeptide is Phosphoheptose isomerase (Helicobacter pylori (strain ATCC 700392 / 26695) (Campylobacter pylori)).